The primary structure comprises 203 residues: TATA-binding protein 2 (203 aa).

A run of 2 repeats spans residues 28-104 (LQNI…ARII) and 118-195 (IQNI…YPVL).

Belongs to the TBP family. Belongs to the TFIID complex together with the TBP-associated factors (TAFs). Binds DNA as monomer. Interacts with RF2A and TFIIB. Interacts with CWZF7.

Its subcellular location is the nucleus. Functionally, general transcription factor that functions at the core of the DNA-binding multiprotein factor TFIID. Binding of TFIID to the TATA box is the initial transcriptional step of the pre-initiation complex (PIC), playing a role in the activation of eukaryotic genes transcribed by RNA polymerase II. The chain is TATA-binding protein 2 (TBP2) from Oryza sativa subsp. japonica (Rice).